The primary structure comprises 626 residues: UvrABC system protein C (626 aa).

Residues 26–105 (QEPGVYFMGD…IKQHQPHFNV (80 aa)) enclose the GIY-YIG domain. Residues 215–250 (QELHQLLTQQMEKAAADLKFEQAALIRDQINSLGKL) form the UVR domain.

This sequence belongs to the UvrC family. In terms of assembly, interacts with UvrB in an incision complex.

The protein localises to the cytoplasm. Functionally, the UvrABC repair system catalyzes the recognition and processing of DNA lesions. UvrC both incises the 5' and 3' sides of the lesion. The N-terminal half is responsible for the 3' incision and the C-terminal half is responsible for the 5' incision. This chain is UvrABC system protein C, found in Synechocystis sp. (strain ATCC 27184 / PCC 6803 / Kazusa).